Consider the following 432-residue polypeptide: MEKFYDEIVSVKAREVLDSRGNPTVEAEVTLSTGVTGSAIVPSGASTGKFEALELRDGNKDYYMGKGVTKAVNNVNNIIEQEVVGLNAFDQVNVDRVMLDLDGTENKENLGANAILAVSMAAARAAANSLGLPLYKYLGGVNAKVLPVPMMNIINGGQHADNNLDIQEFMIMPAGFNSFKDALRAGAEVFHNLKNILKKEGHITSVGDEGGFAPNLNSNEEAIKYIIRAIQAAGYEPGKQIFIAMDAAASEFYNEETKKYSVDGKEMSAAELAEYYISLIDKYPIKSLEDPFDQDDWEGYSEFTAKVGDRVQIVGDDLYVTNVKRLQKGIDLKATNSILIKLNQIGSVTETLDAIELAYKNNMTAVVSHRSGETEDSFIADLVVAVNAGFIKTGSLSRTDRIAKYNQLLRIEDELGSTAQYRGLNAFYSIKK.

Glutamine 167 lines the (2R)-2-phosphoglycerate pocket. Catalysis depends on glutamate 209, which acts as the Proton donor. Mg(2+) is bound by residues aspartate 246, glutamate 289, and aspartate 316. (2R)-2-phosphoglycerate is bound by residues lysine 341, arginine 370, serine 371, and lysine 392. Catalysis depends on lysine 341, which acts as the Proton acceptor.

The protein belongs to the enolase family. The cofactor is Mg(2+).

The protein resides in the cytoplasm. The protein localises to the secreted. Its subcellular location is the cell surface. The enzyme catalyses (2R)-2-phosphoglycerate = phosphoenolpyruvate + H2O. It participates in carbohydrate degradation; glycolysis; pyruvate from D-glyceraldehyde 3-phosphate: step 4/5. Its function is as follows. Catalyzes the reversible conversion of 2-phosphoglycerate (2-PG) into phosphoenolpyruvate (PEP). It is essential for the degradation of carbohydrates via glycolysis. This is Enolase from Petrotoga mobilis (strain DSM 10674 / SJ95).